The sequence spans 644 residues: ATP-dependent zinc metalloprotease FtsH (644 aa).

The Cytoplasmic portion of the chain corresponds to Met1–Asn4. The chain crosses the membrane as a helical span at residues Leu5 to Ser25. Residues Glu26–Leu98 are Periplasmic-facing. The helical transmembrane segment at Leu99–Phe119 threads the bilayer. Topologically, residues Met120 to Lys644 are cytoplasmic. An ATP-binding site is contributed by Gly192–Thr199. Position 414 (His414) interacts with Zn(2+). Residue Glu415 is part of the active site. Zn(2+) contacts are provided by His418 and Asp492. Residues Val598–Lys644 form a disordered region. Positions Asn632–Lys644 are enriched in polar residues.

It in the central section; belongs to the AAA ATPase family. This sequence in the C-terminal section; belongs to the peptidase M41 family. In terms of assembly, homohexamer. Zn(2+) is required as a cofactor.

The protein localises to the cell inner membrane. In terms of biological role, acts as a processive, ATP-dependent zinc metallopeptidase for both cytoplasmic and membrane proteins. Plays a role in the quality control of integral membrane proteins. The protein is ATP-dependent zinc metalloprotease FtsH of Escherichia coli O157:H7.